The chain runs to 491 residues: Probable malate:quinone oxidoreductase (491 aa).

The protein belongs to the MQO family. FAD is required as a cofactor.

It catalyses the reaction (S)-malate + a quinone = a quinol + oxaloacetate. The protein operates within carbohydrate metabolism; tricarboxylic acid cycle; oxaloacetate from (S)-malate (quinone route): step 1/1. In Leifsonia xyli subsp. xyli (strain CTCB07), this protein is Probable malate:quinone oxidoreductase.